The sequence spans 427 residues: 3-phosphoshikimate 1-carboxyvinyltransferase (427 aa).

The 3-phosphoshikimate site is built by Lys22, Ser23, and Arg27. Lys22 is a phosphoenolpyruvate binding site. Phosphoenolpyruvate-binding residues include Gly96 and Arg124. Positions 169, 170, 171, 197, 313, 336, and 340 each coordinate 3-phosphoshikimate. Gln171 contacts phosphoenolpyruvate. Asp313 acts as the Proton acceptor in catalysis. Positions 344, 386, and 411 each coordinate phosphoenolpyruvate.

It belongs to the EPSP synthase family. Monomer.

It is found in the cytoplasm. It carries out the reaction 3-phosphoshikimate + phosphoenolpyruvate = 5-O-(1-carboxyvinyl)-3-phosphoshikimate + phosphate. Its pathway is metabolic intermediate biosynthesis; chorismate biosynthesis; chorismate from D-erythrose 4-phosphate and phosphoenolpyruvate: step 6/7. Catalyzes the transfer of the enolpyruvyl moiety of phosphoenolpyruvate (PEP) to the 5-hydroxyl of shikimate-3-phosphate (S3P) to produce enolpyruvyl shikimate-3-phosphate and inorganic phosphate. The chain is 3-phosphoshikimate 1-carboxyvinyltransferase from Klebsiella pneumoniae subsp. pneumoniae (strain ATCC 700721 / MGH 78578).